The chain runs to 565 residues: NAD-dependent malic enzyme (565 aa).

Y104 functions as the Proton donor in the catalytic mechanism. Position 157 (R157) interacts with NAD(+). The Proton acceptor role is filled by K175. A divalent metal cation contacts are provided by E246, D247, and D270. Positions 270 and 418 each coordinate NAD(+).

This sequence belongs to the malic enzymes family. In terms of assembly, homotetramer. It depends on Mg(2+) as a cofactor. Mn(2+) serves as cofactor.

It catalyses the reaction (S)-malate + NAD(+) = pyruvate + CO2 + NADH. The enzyme catalyses oxaloacetate + H(+) = pyruvate + CO2. The chain is NAD-dependent malic enzyme from Pectobacterium atrosepticum (strain SCRI 1043 / ATCC BAA-672) (Erwinia carotovora subsp. atroseptica).